A 160-amino-acid chain; its full sequence is Phosphopantetheine adenylyltransferase (160 aa).

Ser-9 lines the substrate pocket. ATP is bound by residues 9 to 10 (SF) and His-17. 3 residues coordinate substrate: Lys-41, Val-73, and Lys-87. Residues 88 to 90 (GLR), Glu-98, and 122 to 128 (YSFVSSS) each bind ATP.

This sequence belongs to the bacterial CoaD family. In terms of assembly, homohexamer. Requires Mg(2+) as cofactor.

The protein localises to the cytoplasm. It carries out the reaction (R)-4'-phosphopantetheine + ATP + H(+) = 3'-dephospho-CoA + diphosphate. It functions in the pathway cofactor biosynthesis; coenzyme A biosynthesis; CoA from (R)-pantothenate: step 4/5. Its function is as follows. Reversibly transfers an adenylyl group from ATP to 4'-phosphopantetheine, yielding dephospho-CoA (dPCoA) and pyrophosphate. This is Phosphopantetheine adenylyltransferase from Mycobacterium avium (strain 104).